Consider the following 518-residue polypeptide: Protein PNS1 (518 aa).

Residues 1-14 show a composition bias toward pro residues; it reads MSDYPPPNYPPPNH. Residues 1–24 are disordered; the sequence is MSDYPPPNYPPPNHPQYQQQQDET. Topologically, residues 1 to 63 are cytoplasmic; sequence MSDYPPPNYP…KVEKPKFNDW (63 aa). The helical transmembrane segment at 64 to 84 threads the bilayer; that stretch reads PFAIFFWLVVAGFIAVAGITL. Residues 85–111 are Extracellular-facing; the sequence is NALRSTYGFQGGSIYGSGNTFTLNTNT. Residues 112–132 form a helical membrane-spanning segment; that stretch reads IILFAFIIVMAFILSAAIIVF. The Cytoplasmic portion of the chain corresponds to 133–139; it reads ARLAPKA. Residues 140–160 form a helical membrane-spanning segment; the sequence is FIVTGVILNVVLGIGTAIFYF. Residues 161–163 lie on the Extracellular side of the membrane; sequence VEK. The helical transmembrane segment at 164–184 threads the bilayer; it reads YYSAAIVFLIFALFGAWCYWS. The Cytoplasmic segment spans residues 185–210; that stretch reads SRHRIPLSATILTIVIDVMKMYPSTL. Residues 211-231 traverse the membrane as a helical segment; the sequence is IASFIGLIFSAAFSALFSIVI. Residues 232 to 256 are Extracellular-facing; sequence VATYVKYDPNSNNEACSVGGGSCSK. A helical membrane pass occupies residues 257-277; it reads GKLIGVLVFVFFAGYYISEVI. Over 278-314 the chain is Cytoplasmic; the sequence is RNVIHVVIAGIYGTWYYLANSDQGAPKHPALSSLKRA. A helical transmembrane segment spans residues 315 to 335; sequence LTYCFGSITFGSLIVSLIQLL. The Extracellular portion of the chain corresponds to 336–351; that stretch reads RQFISILRSNFAADGN. A helical transmembrane segment spans residues 352–372; it reads GWGVCGMIILDFFVGFIDWLV. At 373-417 the chain is on the cytoplasmic side; sequence RYLNKYAYCYVALYGKSYIKSAKDTFDLIRFKGMDALINDMFINT. The chain crosses the membrane as a helical span at residues 418-438; the sequence is ALNLYSLFVAYLVALLAYLYL. Residues 439–445 are Extracellular-facing; that stretch reads KFTKPEY. A helical membrane pass occupies residues 446–466; the sequence is NSGGAFYAPVIAFAFLIAGQI. At 467–518 the chain is on the cytoplasmic side; that stretch reads NRISLTVIESGTATFFVALAKDPEIFQMTNRNRFDDIFRNYPQVLEKITSDH.

This sequence belongs to the CTL (choline transporter-like) family.

It localises to the cell membrane. Functionally, probably involved in transport through the plasma membrane. In Candida albicans (strain SC5314 / ATCC MYA-2876) (Yeast), this protein is Protein PNS1 (PNS1).